The primary structure comprises 259 residues: Ubiquinol-cytochrome c reductase complex assembly factor 1 (259 aa).

The protein belongs to the CBP3 family. Interacts with sloth1; the interaction is probably involved in the assembly and stability of the mitochondrial ubiquinol-cytochrome c reductase complex.

Its subcellular location is the mitochondrion inner membrane. In terms of biological role, required for the assembly of the ubiquinol-cytochrome c reductase complex (mitochondrial respiratory chain complex III or cytochrome b-c1 complex). May be involved in cytochrome b translation and/or stability. The polypeptide is Ubiquinol-cytochrome c reductase complex assembly factor 1 (Drosophila melanogaster (Fruit fly)).